The primary structure comprises 446 residues: Putative diacyglycerol O-acyltransferase MT3481 (446 aa).

Histidine 129 acts as the Proton acceptor in catalysis. Residues 425 to 446 (SRALPSAARRGRPSVPTARARH) are disordered.

This sequence belongs to the long-chain O-acyltransferase family.

It carries out the reaction an acyl-CoA + a 1,2-diacyl-sn-glycerol = a triacyl-sn-glycerol + CoA. The protein operates within glycerolipid metabolism; triacylglycerol biosynthesis. In Mycobacterium tuberculosis (strain CDC 1551 / Oshkosh), this protein is Putative diacyglycerol O-acyltransferase MT3481.